The following is a 122-amino-acid chain: Large ribosomal subunit protein uL14 (122 aa).

It belongs to the universal ribosomal protein uL14 family. Part of the 50S ribosomal subunit. Forms a cluster with proteins L3 and L19. In the 70S ribosome, L14 and L19 interact and together make contacts with the 16S rRNA in bridges B5 and B8.

Binds to 23S rRNA. Forms part of two intersubunit bridges in the 70S ribosome. In Thermosipho africanus (strain TCF52B), this protein is Large ribosomal subunit protein uL14.